The primary structure comprises 523 residues: Melanoma-associated antigen E2 (523 aa).

2 MAGE domains span residues 88–288 and 311–502; these read LEDR…YNKA and MNDK…YREA.

The sequence is that of Melanoma-associated antigen E2 (MAGEE2) from Homo sapiens (Human).